Consider the following 119-residue polypeptide: uncharacterized protein (119 aa).

The helical transmembrane segment at 30-50 (LMTLPCVLFLSSFGQAVIVVL) threads the bilayer.

It localises to the membrane. This is an uncharacterized protein from Saccharomyces cerevisiae (strain ATCC 204508 / S288c) (Baker's yeast).